The following is a 487-amino-acid chain: Probable Xaa-Pro aminopeptidase AFUB_014460 (487 aa).

Residues D267, D278, E416, and E455 each coordinate Mn(2+).

The protein belongs to the peptidase M24B family. It depends on Mn(2+) as a cofactor.

It catalyses the reaction Release of any N-terminal amino acid, including proline, that is linked to proline, even from a dipeptide or tripeptide.. Functionally, catalyzes the removal of a penultimate prolyl residue from the N-termini of peptides. This Aspergillus fumigatus (strain CBS 144.89 / FGSC A1163 / CEA10) (Neosartorya fumigata) protein is Probable Xaa-Pro aminopeptidase AFUB_014460.